Consider the following 312-residue polypeptide: Pantothenate synthetase (312 aa).

Met-42–His-49 serves as a coordination point for ATP. The active-site Proton donor is His-49. Gln-73 lines the (R)-pantoate pocket. Gln-73 lines the beta-alanine pocket. Residue Gly-159–Asp-162 coordinates ATP. Residue Gln-165 participates in (R)-pantoate binding. Residues Val-188 and Leu-196–Arg-199 contribute to the ATP site.

Belongs to the pantothenate synthetase family. As to quaternary structure, homodimer.

Its subcellular location is the cytoplasm. It carries out the reaction (R)-pantoate + beta-alanine + ATP = (R)-pantothenate + AMP + diphosphate + H(+). It participates in cofactor biosynthesis; (R)-pantothenate biosynthesis; (R)-pantothenate from (R)-pantoate and beta-alanine: step 1/1. Catalyzes the condensation of pantoate with beta-alanine in an ATP-dependent reaction via a pantoyl-adenylate intermediate. This chain is Pantothenate synthetase, found in Rhodococcus jostii (strain RHA1).